The chain runs to 463 residues: Chromosomal replication initiator protein DnaA (463 aa).

The domain I, interacts with DnaA modulators stretch occupies residues methionine 1–valine 83. The domain II stretch occupies residues valine 83–serine 126. The interval asparagine 127–alanine 343 is domain III, AAA+ region. 4 residues coordinate ATP: glycine 171, glycine 173, lysine 174, and threonine 175. The segment at asparagine 344–serine 463 is domain IV, binds dsDNA.

The protein belongs to the DnaA family. As to quaternary structure, oligomerizes as a right-handed, spiral filament on DNA at oriC.

The protein localises to the cytoplasm. Plays an essential role in the initiation and regulation of chromosomal replication. ATP-DnaA binds to the origin of replication (oriC) to initiate formation of the DNA replication initiation complex once per cell cycle. Binds the DnaA box (a 9 base pair repeat at the origin) and separates the double-stranded (ds)DNA. Forms a right-handed helical filament on oriC DNA; dsDNA binds to the exterior of the filament while single-stranded (ss)DNA is stabiized in the filament's interior. The ATP-DnaA-oriC complex binds and stabilizes one strand of the AT-rich DNA unwinding element (DUE), permitting loading of DNA polymerase. After initiation quickly degrades to an ADP-DnaA complex that is not apt for DNA replication. Binds acidic phospholipids. The protein is Chromosomal replication initiator protein DnaA of Erwinia tasmaniensis (strain DSM 17950 / CFBP 7177 / CIP 109463 / NCPPB 4357 / Et1/99).